The following is a 93-amino-acid chain: Small ribosomal subunit protein bS6 (93 aa).

Belongs to the bacterial ribosomal protein bS6 family.

Its function is as follows. Binds together with bS18 to 16S ribosomal RNA. This Phytoplasma australiense protein is Small ribosomal subunit protein bS6.